Consider the following 438-residue polypeptide: Ribosomal protein uS12 methylthiotransferase RimO (438 aa).

The MTTase N-terminal domain occupies 4 to 114; sequence PRVSFVSLGC…VMNAVHEVAP (111 aa). Residues Cys13, Cys49, Cys78, Cys146, Cys150, and Cys153 each contribute to the [4Fe-4S] cluster site. A Radical SAM core domain is found at 132–370; that stretch reads LTPRHYAYLK…MAKQQQISTN (239 aa). A TRAM domain is found at 373–438; that stretch reads KKKVGKRLPV…DAYDLHGTAV (66 aa).

This sequence belongs to the methylthiotransferase family. RimO subfamily. [4Fe-4S] cluster serves as cofactor.

The protein resides in the cytoplasm. It carries out the reaction L-aspartate(89)-[ribosomal protein uS12]-hydrogen + (sulfur carrier)-SH + AH2 + 2 S-adenosyl-L-methionine = 3-methylsulfanyl-L-aspartate(89)-[ribosomal protein uS12]-hydrogen + (sulfur carrier)-H + 5'-deoxyadenosine + L-methionine + A + S-adenosyl-L-homocysteine + 2 H(+). Functionally, catalyzes the methylthiolation of an aspartic acid residue of ribosomal protein uS12. This chain is Ribosomal protein uS12 methylthiotransferase RimO, found in Brucella ovis (strain ATCC 25840 / 63/290 / NCTC 10512).